The sequence spans 135 residues: Lactoylglutathione lyase (135 aa).

A VOC domain is found at 2–126 (RLLHTMLRVG…DGYKIELIEA (125 aa)). Residue His-5 coordinates Ni(2+). Arg-9 is a binding site for substrate. Glu-56 lines the Ni(2+) pocket. Substrate-binding residues include Asn-60 and His-74. Ni(2+) contacts are provided by His-74 and Glu-122. The Proton donor/acceptor role is filled by Glu-122.

It belongs to the glyoxalase I family. As to quaternary structure, homodimer. Requires Ni(2+) as cofactor.

The enzyme catalyses (R)-S-lactoylglutathione = methylglyoxal + glutathione. It functions in the pathway secondary metabolite metabolism; methylglyoxal degradation; (R)-lactate from methylglyoxal: step 1/2. Functionally, catalyzes the conversion of hemimercaptal, formed from methylglyoxal and glutathione, to S-lactoylglutathione. This Salmonella typhi protein is Lactoylglutathione lyase (gloA).